The primary structure comprises 264 residues: Triosephosphate isomerase (264 aa).

Residue 12–14 participates in substrate binding; sequence NWK. Histidine 104 (electrophile) is an active-site residue. Glutamate 176 acts as the Proton acceptor in catalysis. Residues glycine 182, serine 222, and 243–244 contribute to the substrate site; that span reads GG.

It belongs to the triosephosphate isomerase family. In terms of assembly, homodimer.

Its subcellular location is the cytoplasm. It carries out the reaction D-glyceraldehyde 3-phosphate = dihydroxyacetone phosphate. The protein operates within carbohydrate biosynthesis; gluconeogenesis. Its pathway is carbohydrate degradation; glycolysis; D-glyceraldehyde 3-phosphate from glycerone phosphate: step 1/1. Involved in the gluconeogenesis. Catalyzes stereospecifically the conversion of dihydroxyacetone phosphate (DHAP) to D-glyceraldehyde-3-phosphate (G3P). The chain is Triosephosphate isomerase from Bifidobacterium adolescentis (strain ATCC 15703 / DSM 20083 / NCTC 11814 / E194a).